Here is a 200-residue protein sequence, read N- to C-terminus: MELNFEKPLSLLTLDEIDQQEGGVIQSFRTGHTSPYPDPADWLNGEEPPPGVFITSVEKVLNWSRHYSLWPVMFGLACCAIEMMCMAASRWDLARFGMDIFRASPRQADLMIVAGTLTWKMAPWLKRIYDQMPEPKWVLAMGACGTSGGLFRDSYSVVPGFNLVVPVDVYVPGCPPRPEALMRAIMDIHEKIDKTCILKR.

Cys-78, Cys-79, Cys-144, and Cys-174 together coordinate [4Fe-4S] cluster.

This sequence belongs to the complex I 20 kDa subunit family. In terms of assembly, NDH-1 is composed of 14 different subunits. Subunits NuoB, C, D, E, F, and G constitute the peripheral sector of the complex. It depends on [4Fe-4S] cluster as a cofactor.

It localises to the cell membrane. The enzyme catalyses a quinone + NADH + 5 H(+)(in) = a quinol + NAD(+) + 4 H(+)(out). Its function is as follows. NDH-1 shuttles electrons from NADH, via FMN and iron-sulfur (Fe-S) centers, to quinones in the respiratory chain. The immediate electron acceptor for the enzyme in this species is believed to be ubiquinone. Couples the redox reaction to proton translocation (for every two electrons transferred, four hydrogen ions are translocated across the cytoplasmic membrane), and thus conserves the redox energy in a proton gradient. The polypeptide is NADH-quinone oxidoreductase subunit B (Dehalococcoides mccartyi (strain ATCC BAA-2100 / JCM 16839 / KCTC 5957 / BAV1)).